We begin with the raw amino-acid sequence, 201 residues long: Recombination protein RecR (201 aa).

A C4-type zinc finger spans residues 59 to 74 (CKICGNIDTENICRIC). Positions 82-177 (SIIAIVETVA…KISRLASGIP (96 aa)) constitute a Toprim domain.

It belongs to the RecR family.

In terms of biological role, may play a role in DNA repair. It seems to be involved in an RecBC-independent recombinational process of DNA repair. It may act with RecF and RecO. The protein is Recombination protein RecR of Rickettsia massiliae (strain Mtu5).